The following is a 299-amino-acid chain: Ribonuclease Z (299 aa).

Zn(2+) contacts are provided by His60, His62, Asp64, His65, His137, Asp207, and His265. Asp64 functions as the Proton acceptor in the catalytic mechanism.

It belongs to the RNase Z family. Homodimer. Zn(2+) serves as cofactor.

It carries out the reaction Endonucleolytic cleavage of RNA, removing extra 3' nucleotides from tRNA precursor, generating 3' termini of tRNAs. A 3'-hydroxy group is left at the tRNA terminus and a 5'-phosphoryl group is left at the trailer molecule.. Functionally, zinc phosphodiesterase, which displays some tRNA 3'-processing endonuclease activity. Probably involved in tRNA maturation, by removing a 3'-trailer from precursor tRNA. This chain is Ribonuclease Z, found in Nitrosopumilus maritimus (strain SCM1).